The following is a 389-amino-acid chain: Gustatory receptor 68a (389 aa).

Topologically, residues 1 to 42 are cytoplasmic; the sequence is MKIYQDIYPISKPSQIFAILPFYSGDVDDGFRFGGLGRWYGR. A helical membrane pass occupies residues 43–63; that stretch reads LVALIILIGSLTLGEDVLFAS. Residues 64-82 are Extracellular-facing; sequence KEYRLVASAQGDTEEINRT. The N-linked (GlcNAc...) asparagine glycan is linked to Asn80. Residues 83–103 traverse the membrane as a helical segment; sequence IETLLCIISYTMVVLSSVQNA. Topologically, residues 104–133 are cytoplasmic; the sequence is SRHFRTLHDIAKIDEYLLANGFRETYSCRN. The helical transmembrane segment at 134–154 threads the bilayer; sequence LTILVTSAAGGVLAVAFYYIH. At 155-164 the chain is on the extracellular side; it reads YRSGIGAKRQ. Residues 165–185 traverse the membrane as a helical segment; that stretch reads IILLLIYFLQLLYSTLLALYL. Residues 186–236 lie on the Cytoplasmic side of the membrane; it reads RTLMMNLAQRIGFLNQKLDTFNLQDCGHMENWRELSNLIEVLCKFRYITEN. The chain crosses the membrane as a helical span at residues 237–257; sequence INCVAGVSLLFYFGFSFYTVT. Residue Asn258 is glycosylated (N-linked (GlcNAc...) asparagine). The Extracellular segment spans residues 258–281; sequence NQSYLAFATLTAGSLSSKTEVADT. The helical transmembrane segment at 282 to 302 threads the bilayer; that stretch reads IGLSCIWVLAETITMIVICSA. Topologically, residues 303–352 are cytoplasmic; that stretch reads CDGLASEVNGTAQILARIYGKSKQFQNLIDKFLTKSIKQDLQFTAYGFFS. Residues 353 to 373 form a helical membrane-spanning segment; that stretch reads IDNSTLFKIFSAVTTYLVILI. At 374–389 the chain is on the extracellular side; that stretch reads QFKQLEDSKVEDISQA.

Belongs to the insect chemoreceptor superfamily. Gustatory receptor (GR) family. Gr21a subfamily. Expressed in chemosensory neurons of about 20 male-specific gustatory bristles in the forelegs. No expression is seen in the mechanosensory neurons. In larvae, expressed in the ventral pharyngeal sense organ.

It localises to the cell membrane. Functionally, dsx-dependent essential component of pheromone-driven courtship behavior. Recognizes a female pheromone involved in the second step (tapping step) of the courtship display which is essential for efficient execution of the entire courtship sequence and timely mating. Required for detection of the male sex pheromone CH503 which is transferred from males to females during mating and inhibits courtship behavior by other males. Gr68a-expressing neurons in the male foreleg relay signals to the suboesophageal zone (SEZ) and courtship suppression is mediated by the release of the neuropeptide tachykinin from a cluster of 8-10 neurons in the SEZ. This chain is Gustatory receptor 68a (Gr68a), found in Drosophila melanogaster (Fruit fly).